The chain runs to 294 residues: ATP synthase gamma chain (294 aa).

Belongs to the ATPase gamma chain family. F-type ATPases have 2 components, CF(1) - the catalytic core - and CF(0) - the membrane proton channel. CF(1) has five subunits: alpha(3), beta(3), gamma(1), delta(1), epsilon(1). CF(0) has three main subunits: a, b and c.

It is found in the cell membrane. Functionally, produces ATP from ADP in the presence of a proton gradient across the membrane. The gamma chain is believed to be important in regulating ATPase activity and the flow of protons through the CF(0) complex. In Opitutus terrae (strain DSM 11246 / JCM 15787 / PB90-1), this protein is ATP synthase gamma chain.